The sequence spans 313 residues: Protoheme IX farnesyltransferase (313 aa).

8 helical membrane-spanning segments follow: residues 34-54, 56-76, 105-125, 128-148, 152-172, 173-193, 243-263, and 291-311; these read VIEL…RGTV, PLLI…ANTL, HALI…WWTT, LSAH…TLVL, TSQN…IGWS, AVTG…FFWT, LALA…TWFL, and YLAV…PTLF.

It belongs to the UbiA prenyltransferase family. Protoheme IX farnesyltransferase subfamily.

Its subcellular location is the cell membrane. It carries out the reaction heme b + (2E,6E)-farnesyl diphosphate + H2O = Fe(II)-heme o + diphosphate. It functions in the pathway porphyrin-containing compound metabolism; heme O biosynthesis; heme O from protoheme: step 1/1. Functionally, converts heme B (protoheme IX) to heme O by substitution of the vinyl group on carbon 2 of heme B porphyrin ring with a hydroxyethyl farnesyl side group. This chain is Protoheme IX farnesyltransferase, found in Mycolicibacterium vanbaalenii (strain DSM 7251 / JCM 13017 / BCRC 16820 / KCTC 9966 / NRRL B-24157 / PYR-1) (Mycobacterium vanbaalenii).